A 501-amino-acid chain; its full sequence is Phenylalanine--tRNA ligase alpha subunit (501 aa).

Thr-340 and Phe-423 together coordinate L-phenylalanine. Glu-425 serves as a coordination point for Mg(2+). Phe-448 is an L-phenylalanine binding site.

Belongs to the class-II aminoacyl-tRNA synthetase family. Phe-tRNA synthetase alpha subunit type 2 subfamily. Tetramer of two alpha and two beta subunits. It depends on Mg(2+) as a cofactor.

It is found in the cytoplasm. The enzyme catalyses tRNA(Phe) + L-phenylalanine + ATP = L-phenylalanyl-tRNA(Phe) + AMP + diphosphate + H(+). This chain is Phenylalanine--tRNA ligase alpha subunit, found in Methanococcus vannielii (strain ATCC 35089 / DSM 1224 / JCM 13029 / OCM 148 / SB).